A 347-amino-acid polypeptide reads, in one-letter code: Phosphate acyltransferase (347 aa).

The protein belongs to the PlsX family. Homodimer. Probably interacts with PlsY.

Its subcellular location is the cytoplasm. It catalyses the reaction a fatty acyl-[ACP] + phosphate = an acyl phosphate + holo-[ACP]. It participates in lipid metabolism; phospholipid metabolism. Catalyzes the reversible formation of acyl-phosphate (acyl-PO(4)) from acyl-[acyl-carrier-protein] (acyl-ACP). This enzyme utilizes acyl-ACP as fatty acyl donor, but not acyl-CoA. The chain is Phosphate acyltransferase from Lawsonia intracellularis (strain PHE/MN1-00).